The chain runs to 883 residues: HTH-type transcriptional regulator AlkS (883 aa).

The region spanning 816 to 881 (ENKAGDFLTL…QAIIEAERQG (66 aa)) is the HTH luxR-type domain. Residues 840–859 (NKQIATKMYVTEDAIKWHMR) constitute a DNA-binding region (H-T-H motif).

It functions in the pathway hydrocarbon metabolism; alkane degradation. Functionally, may act as a transcriptional regulator of AlkB. The sequence is that of HTH-type transcriptional regulator AlkS (alkS) from Pseudomonas putida (Arthrobacter siderocapsulatus).